A 790-amino-acid polypeptide reads, in one-letter code: Tumor necrosis factor alpha-induced protein 3 (790 aa).

N-acetylalanine is present on Ala-2. The segment at 58–300 (PQFREIIHKA…LTDPENEMKE (243 aa)) is TRAF-binding. Residues 92 to 263 (LVALKTNGDG…SHHFVPLVTL (172 aa)) enclose the OTU domain. Asp-100 is an active-site residue. The active-site Nucleophile is the Cys-103. Interaction with ubiquitin stretches follow at residues 157–159 (LCY), 190–192 (SLE), and 224–227 (FAPL). His-256 (proton acceptor) is an active-site residue. An interaction with TNIP1 region spans residues 369 to 775 (AQNPMESSLP…ACDHFGNAKC (407 aa)). The A20-type 1 zinc-finger motif lies at 381-416 (SLMDVKCETPNCPFFMSVNTQPLCHECSERRQKNQN). Positions 386 to 453 (KCETPNCPFF…EPLAWNPEEP (68 aa)) are interaction with RIPK1. Residues Cys-387, Cys-392, Cys-404, and Cys-407 each contribute to the Zn(2+) site. The segment at 415 to 467 (QNKLPKLNSKPGPEGLPGMALGASRGEAYEPLAWNPEEPTGGPHSAPPTAPSP) is disordered. The residue at position 459 (Ser-459) is a Phosphoserine. 2 A20-type zinc fingers span residues 472–507 (ETTA…LHAS) and 515–548 (HLDP…AEAS). Cys-478, Cys-483, Cys-495, Cys-498, Cys-521, Cys-524, Cys-536, and Cys-539 together coordinate Zn(2+). A disordered region spans residues 550 to 580 (SLSTSLPPSCHQRSKSDPSQLVRSPSPHSCH). Polar residues predominate over residues 566-576 (DPSQLVRSPSP). Phosphoserine is present on Ser-575. The segment at 601-636 (RTGTSKCRKAGCMYFGTPENKGFCTLCFIEYRENKH) adopts an A20-type 4 zinc-finger fold. Residues 605–655 (SKCRKAGCMYFGTPENKGFCTLCFIEYRENKHLVAASGKASPTASRFQNTI) form a required for proteasomal degradation of UBE2N and UBE2D3, TRAF6 deubiquitination, and TAX1BP1 interaction with UBE2N region. Residues 606 to 790 (KCRKAGCMYF…ECFQFKQMYG (185 aa)) are sufficient for inhibitory activity of TNF-induced NF-kappa-B activity. Zn(2+) is bound by residues Cys-607, Cys-612, Cys-624, and Cys-627. Ser-645 carries the phosphoserine modification. The segment at 651–686 (FQNTIPCLGRECGTLGSTMFEGYCQKCFIEAQNQRF) adopts an A20-type 5 zinc-finger fold. The Zn(2+) site is built by Cys-657, Cys-662, Cys-674, and Cys-677. Residues 689 to 705 (AKRTEEQLRSSQRRDVP) show a composition bias toward basic and acidic residues. Residues 689-712 (AKRTEEQLRSSQRRDVPRTTQSTS) form a disordered region. The tract at residues 697–790 (RSSQRRDVPR…ECFQFKQMYG (94 aa)) is required for lysosomal localization and for TRAF2 lysosomal degradation. A20-type zinc fingers lie at residues 710 to 745 (STSR…RMGP) and 756 to 790 (DPPK…QMYG). The Zn(2+) site is built by Cys-716, Cys-721, Cys-733, Cys-736, Cys-762, Cys-767, Cys-779, and Cys-782.

The protein belongs to the peptidase C64 family. In terms of assembly, homodimer. Interacts with TNIP1, TAX1BP1 and TRAF2. Interacts with RNF11, ITCH and TAX1BP1 only after TNF stimulation; these interaction are transient and they are lost after 1 hour of stimulation with TNF. Interacts with YWHAZ and YWHAH. Interacts with IKBKG; the interaction is induced by TNF stimulation and by polyubiquitin. Interacts with RIPK1. Interacts with UBE2N; the interaction requires TAX1BP1. Interacts with TRAF6. Post-translationally, proteolytically cleaved by MALT1 upon TCR stimulation; disrupts NF-kappa-B inhibitory function and results in increased IL-2 production. It is proposed that only a fraction of TNFAIP3 colocalized with TCR and CBM complex is cleaved, leaving the main TNFAIP3 pool intact.

Its subcellular location is the cytoplasm. It localises to the nucleus. It is found in the lysosome. It catalyses the reaction Thiol-dependent hydrolysis of ester, thioester, amide, peptide and isopeptide bonds formed by the C-terminal Gly of ubiquitin (a 76-residue protein attached to proteins as an intracellular targeting signal).. Its function is as follows. Ubiquitin-editing enzyme that contains both ubiquitin ligase and deubiquitinase activities. Involved in immune and inflammatory responses signaled by cytokines, such as TNF-alpha and IL-1 beta, or pathogens via Toll-like receptors (TLRs) through terminating NF-kappa-B activity. Essential component of a ubiquitin-editing protein complex, comprising also RNF11, ITCH and TAX1BP1, that ensures the transient nature of inflammatory signaling pathways. In cooperation with TAX1BP1 promotes disassembly of E2-E3 ubiquitin protein ligase complexes in IL-1R and TNFR-1 pathways; affected are at least E3 ligases TRAF6, TRAF2 and BIRC2, and E2 ubiquitin-conjugating enzymes UBE2N and UBE2D3. In cooperation with TAX1BP1 promotes ubiquitination of UBE2N and proteasomal degradation of UBE2N and UBE2D3. Upon TNF stimulation, deubiquitinates 'Lys-63'-polyubiquitin chains on RIPK1 and catalyzes the formation of 'Lys-48'-polyubiquitin chains. This leads to RIPK1 proteasomal degradation and consequently termination of the TNF- or LPS-mediated activation of NF-kappa-B. Deubiquitinates TRAF6 probably acting on 'Lys-63'-linked polyubiquitin. Upon T-cell receptor (TCR)-mediated T-cell activation, deubiquitinates 'Lys-63'-polyubiquitin chains on MALT1 thereby mediating disassociation of the CBM (CARD11:BCL10:MALT1) and IKK complexes and preventing sustained IKK activation. Deubiquitinates NEMO/IKBKG; the function is facilitated by TNIP1 and leads to inhibition of NF-kappa-B activation. Upon stimulation by bacterial peptidoglycans, probably deubiquitinates RIPK2. Can also inhibit I-kappa-B-kinase (IKK) through a non-catalytic mechanism which involves polyubiquitin; polyubiquitin promotes association with IKBKG and prevents IKK MAP3K7-mediated phosphorylation. Targets TRAF2 for lysosomal degradation. In vitro able to deubiquitinate 'Lys-11'-, 'Lys-48'- and 'Lys-63' polyubiquitin chains. Inhibitor of programmed cell death. Has a role in the function of the lymphoid system. Required for LPS-induced production of pro-inflammatory cytokines and IFN beta in LPS-tolerized macrophages. This Macaca fascicularis (Crab-eating macaque) protein is Tumor necrosis factor alpha-induced protein 3 (TNFAIP3).